The following is an 89-amino-acid chain: Small ribosomal subunit protein uS15 (89 aa).

Belongs to the universal ribosomal protein uS15 family. Part of the 30S ribosomal subunit. Forms a bridge to the 50S subunit in the 70S ribosome, contacting the 23S rRNA.

Its function is as follows. One of the primary rRNA binding proteins, it binds directly to 16S rRNA where it helps nucleate assembly of the platform of the 30S subunit by binding and bridging several RNA helices of the 16S rRNA. Functionally, forms an intersubunit bridge (bridge B4) with the 23S rRNA of the 50S subunit in the ribosome. In Azobacteroides pseudotrichonymphae genomovar. CFP2, this protein is Small ribosomal subunit protein uS15.